A 212-amino-acid chain; its full sequence is MNLLIMGLPGAGKGTQAAKIVEKFGLAHISTGDMFRAAMANQTEMGTLAKSFIDKGELVPDEVTNGIVKERLSESDITKKGFLLDGYPRTIEQAHALDEILSKLNLKLDGVINIDVDPACLVERLSGRIINRKTGETYHKVFNPPADYNEDDYYQREDDKPETVKRRLDVNIAQGHPIIEYYRNKGLVYDIEGNQDINLVFETIAKVLANLS.

10–15 (GAGKGT) contributes to the ATP binding site. An NMP region spans residues 30–59 (STGDMFRAAMANQTEMGTLAKSFIDKGELV). Residues threonine 31, arginine 36, 57-59 (ELV), 86-89 (GYPR), and glutamine 93 each bind AMP. Residues 127–159 (GRIINRKTGETYHKVFNPPADYNEDDYYQREDD) form an LID region. Residues arginine 128 and 137 to 138 (TY) contribute to the ATP site. Residues arginine 156 and arginine 167 each coordinate AMP. Glutamine 195 is an ATP binding site.

It belongs to the adenylate kinase family. As to quaternary structure, monomer.

It localises to the cytoplasm. The catalysed reaction is AMP + ATP = 2 ADP. It participates in purine metabolism; AMP biosynthesis via salvage pathway; AMP from ADP: step 1/1. In terms of biological role, catalyzes the reversible transfer of the terminal phosphate group between ATP and AMP. Plays an important role in cellular energy homeostasis and in adenine nucleotide metabolism. The polypeptide is Adenylate kinase (Streptococcus mutans serotype c (strain ATCC 700610 / UA159)).